The sequence spans 432 residues: Enolase (432 aa).

Glutamine 167 contacts (2R)-2-phosphoglycerate. Glutamate 209 serves as the catalytic Proton donor. The Mg(2+) site is built by aspartate 246, glutamate 290, and aspartate 317. Positions 342, 371, 372, and 393 each coordinate (2R)-2-phosphoglycerate. Residue lysine 342 is the Proton acceptor of the active site.

The protein belongs to the enolase family. Component of the RNA degradosome, a multiprotein complex involved in RNA processing and mRNA degradation. Mg(2+) serves as cofactor.

It is found in the cytoplasm. The protein resides in the secreted. It localises to the cell surface. It catalyses the reaction (2R)-2-phosphoglycerate = phosphoenolpyruvate + H2O. It participates in carbohydrate degradation; glycolysis; pyruvate from D-glyceraldehyde 3-phosphate: step 4/5. Its function is as follows. Catalyzes the reversible conversion of 2-phosphoglycerate (2-PG) into phosphoenolpyruvate (PEP). It is essential for the degradation of carbohydrates via glycolysis. This is Enolase from Shigella sonnei (strain Ss046).